Here is a 430-residue protein sequence, read N- to C-terminus: Enolase (430 aa).

(2R)-2-phosphoglycerate is bound at residue glutamine 163. The active-site Proton donor is the glutamate 205. Aspartate 242, glutamate 287, and aspartate 314 together coordinate Mg(2+). (2R)-2-phosphoglycerate-binding residues include lysine 339, arginine 368, serine 369, and lysine 390. Lysine 339 serves as the catalytic Proton acceptor.

The protein belongs to the enolase family. The cofactor is Mg(2+).

It is found in the cytoplasm. The protein localises to the secreted. It localises to the cell surface. The enzyme catalyses (2R)-2-phosphoglycerate = phosphoenolpyruvate + H2O. It participates in carbohydrate degradation; glycolysis; pyruvate from D-glyceraldehyde 3-phosphate: step 4/5. Catalyzes the reversible conversion of 2-phosphoglycerate (2-PG) into phosphoenolpyruvate (PEP). It is essential for the degradation of carbohydrates via glycolysis. The polypeptide is Enolase (Bacillus cytotoxicus (strain DSM 22905 / CIP 110041 / 391-98 / NVH 391-98)).